The primary structure comprises 394 residues: Muscle cell intermediate filament protein AV71 (394 aa).

The interval 1-73 is coil 1B; the sequence is AEINLVRRRV…RVHDQEITEL (73 aa). An IF rod domain is found at 1–239; sequence AEINLVRRRV…KMLEGEENRA (239 aa). The tract at residues 74–91 is linker 12; sequence QAMAARDTTPENREYFKN. Residues 92-239 form a coil 2 region; it reads ELSSAIRDIR…KMLEGEENRA (148 aa). Residues 240 to 394 form a tail region; that stretch reads GLRQLVEQVV…HIQRSSHTIN (155 aa). The LTD domain maps to 272–389; the sequence is SRTSFQRSAK…EERASHIQRS (118 aa).

The protein belongs to the intermediate filament family.

The chain is Muscle cell intermediate filament protein AV71 (AV71) from Acanthocheilonema viteae (Filarial nematode worm).